The sequence spans 193 residues: Putative histone H2B type 2-C (193 aa).

Low complexity predominate over residues 1 to 12 (MPEPAKFAPAPK). The disordered stretch occupies residues 1–33 (MPEPAKFAPAPKKGSKKAVTKAQKKDGKKRKRS). An N-acetylproline modification is found at P2. K6 carries the post-translational modification N6-(2-hydroxyisobutyryl)lysine; alternate. N6-(beta-hydroxybutyryl)lysine; alternate is present on residues K6 and K12. 3 positions are modified to N6-acetyllysine; alternate: K6, K12, and K13. K6 carries the N6-butyryllysine; alternate modification. Residues K6, K12, and K13 each carry the N6-crotonyllysine; alternate modification. An N6-lactoyllysine; alternate mark is found at K6 and K12. K6 is covalently cross-linked (Glycyl lysine isopeptide (Lys-Gly) (interchain with G-Cter in SUMO2); alternate). K13 carries the post-translational modification N6-(2-hydroxyisobutyryl)lysine; alternate. S15 is modified (phosphoserine; by STK4/MST1). 4 positions are modified to N6-acetyllysine; alternate: K16, K17, K21, and K24. K16, K17, K21, and K24 each carry N6-crotonyllysine; alternate. 4 positions are modified to N6-lactoyllysine; alternate: K16, K17, K21, and K24. An N6-(beta-hydroxybutyryl)lysine; alternate mark is found at K17 and K21. K17 carries the post-translational modification N6-glutaryllysine; alternate. Residues K21 and K24 each carry the N6-(2-hydroxyisobutyryl)lysine; alternate modification. K21 carries the N6-butyryllysine; alternate modification. Residue K21 forms a Glycyl lysine isopeptide (Lys-Gly) (interchain with G-Cter in SUMO2); alternate linkage. K25 is subject to N6-(2-hydroxyisobutyryl)lysine. N6-(2-hydroxyisobutyryl)lysine; alternate is present on K35. The residue at position 35 (K35) is an N6-(beta-hydroxybutyryl)lysine; alternate. Residue K35 is modified to N6-crotonyllysine; alternate. N6-glutaryllysine; alternate is present on K35. An N6-succinyllysine; alternate modification is found at K35. K35 is covalently cross-linked (Glycyl lysine isopeptide (Lys-Gly) (interchain with G-Cter in ubiquitin); alternate). At S37 the chain carries Phosphoserine; by AMPK. K44, K47, and K58 each carry N6-(2-hydroxyisobutyryl)lysine; alternate. The residue at position 44 (K44) is an N6-lactoyllysine; alternate. N6-glutaryllysine; alternate is present on residues K44 and K47. K47 carries the post-translational modification N6-methyllysine; alternate. Residue K58 is modified to N6,N6-dimethyllysine; alternate. Residue R80 is modified to Dimethylated arginine. K86 is subject to N6-(2-hydroxyisobutyryl)lysine; alternate. K86 carries the N6-(beta-hydroxybutyryl)lysine; alternate modification. Residue K86 is modified to N6-acetyllysine; alternate. N6-lactoyllysine; alternate is present on K86. Residue K86 is modified to N6,N6,N6-trimethyllysine; alternate. Omega-N-methylarginine occurs at positions 87 and 93. Residues 111–136 (PCPRAPRRSPSTPAPSESLPGPGARS) are disordered.

Belongs to the histone H2B family. In terms of assembly, the nucleosome is a histone octamer containing two molecules each of H2A, H2B, H3 and H4 assembled in one H3-H4 heterotetramer and two H2A-H2B heterodimers. The octamer wraps approximately 147 bp of DNA. Phosphorylation at Ser-37 (H2BS36ph) by AMPK in response to stress promotes transcription. Phosphorylated on Ser-15 (H2BS14ph) by STK4/MST1 during apoptosis; which facilitates apoptotic chromatin condensation. Also phosphorylated on Ser-15 in response to DNA double strand breaks (DSBs), and in correlation with somatic hypermutation and immunoglobulin class-switch recombination. Post-translationally, crotonylation (Kcr) is specifically present in male germ cells and marks testis-specific genes in post-meiotic cells, including X-linked genes that escape sex chromosome inactivation in haploid cells. Crotonylation marks active promoters and enhancers and confers resistance to transcriptional repressors. It is also associated with post-meiotically activated genes on autosomes. In terms of processing, lactylated in macrophages by EP300/P300 by using lactoyl-CoA directly derived from endogenous or exogenous lactate, leading to stimulates gene transcription.

The protein localises to the nucleus. It localises to the chromosome. Its function is as follows. Core component of nucleosome. Nucleosomes wrap and compact DNA into chromatin, limiting DNA accessibility to the cellular machineries which require DNA as a template. Histones thereby play a central role in transcription regulation, DNA repair, DNA replication and chromosomal stability. DNA accessibility is regulated via a complex set of post-translational modifications of histones, also called histone code, and nucleosome remodeling. This Homo sapiens (Human) protein is Putative histone H2B type 2-C.